Reading from the N-terminus, the 620-residue chain is Arginine--tRNA ligase (620 aa).

The 'HIGH' region signature appears at 147–157; that stretch reads ANPTGPIHIGG.

It belongs to the class-I aminoacyl-tRNA synthetase family. Monomer.

The protein localises to the cytoplasm. It carries out the reaction tRNA(Arg) + L-arginine + ATP = L-arginyl-tRNA(Arg) + AMP + diphosphate. The polypeptide is Arginine--tRNA ligase (Bifidobacterium longum (strain DJO10A)).